Reading from the N-terminus, the 35-residue chain is uncharacterized protein (35 aa).

The chain crosses the membrane as a helical span at residues 10–30 (LMITASFFAIFIIIVVSVLLL).

It is found in the membrane. This is an uncharacterized protein from Salmonella paratyphi A (strain ATCC 9150 / SARB42).